A 344-amino-acid polypeptide reads, in one-letter code: Uroporphyrinogen decarboxylase (344 aa).

Substrate-binding positions include 23 to 27 (RQAGR), Asp73, Tyr149, Thr204, and His321.

This sequence belongs to the uroporphyrinogen decarboxylase family. Homodimer.

Its subcellular location is the cytoplasm. The catalysed reaction is uroporphyrinogen III + 4 H(+) = coproporphyrinogen III + 4 CO2. It participates in porphyrin-containing compound metabolism; protoporphyrin-IX biosynthesis; coproporphyrinogen-III from 5-aminolevulinate: step 4/4. Its function is as follows. Catalyzes the decarboxylation of four acetate groups of uroporphyrinogen-III to yield coproporphyrinogen-III. The protein is Uroporphyrinogen decarboxylase of Francisella philomiragia subsp. philomiragia (strain ATCC 25017 / CCUG 19701 / FSC 153 / O#319-036).